The chain runs to 90 residues: UPF0335 protein bsl7135 (90 aa).

This sequence belongs to the UPF0335 family.

This is UPF0335 protein bsl7135 from Bradyrhizobium diazoefficiens (strain JCM 10833 / BCRC 13528 / IAM 13628 / NBRC 14792 / USDA 110).